Reading from the N-terminus, the 186-residue chain is MKLLIDFFPIILFFAAFKVWGIYVATAVAIAATVVQIGYIRLKHGKVEPLQWLSLGVIVLFGGATLLAHSETFIKWKPTVLYWLMGGTLLVGQLVFRKNFIQSLMGAQIDLPAPVWRNLNWGWTGFFATMGVLNLWVAYNFDTDTWVNFKLFGGIGLMFAFVIAQALYLSRHVKDEGDAAPKDLQP.

5 helical membrane passes run 10-30 (IILF…AVAI), 47-67 (VEPL…ATLL), 76-96 (WKPT…QLVF), 121-141 (WGWT…AYNF), and 149-169 (FKLF…ALYL).

The protein belongs to the YciB family.

Its subcellular location is the cell inner membrane. Plays a role in cell envelope biogenesis, maintenance of cell envelope integrity and membrane homeostasis. This chain is Inner membrane-spanning protein YciB, found in Acidovorax sp. (strain JS42).